A 396-amino-acid polypeptide reads, in one-letter code: Na(+)/H(+) antiporter NhaA (396 aa).

11 consecutive transmembrane segments (helical) span residues 16-36 (GIIL…GLAG), 59-79 (LLLW…GLEV), 95-115 (TFPA…YAFF), 124-144 (AGWA…MALL), 154-174 (VFLL…IALF), 178-198 (QLSL…LWMN), 213-233 (LVLW…GVIV), 254-274 (ALHP…NAGV), 278-298 (GIGL…GLFI), 328-348 (IFAV…IASL), and 363-383 (LGIL…LRIA).

The protein belongs to the NhaA Na(+)/H(+) (TC 2.A.33) antiporter family.

The protein resides in the cell inner membrane. The enzyme catalyses Na(+)(in) + 2 H(+)(out) = Na(+)(out) + 2 H(+)(in). In terms of biological role, na(+)/H(+) antiporter that extrudes sodium in exchange for external protons. The sequence is that of Na(+)/H(+) antiporter NhaA from Aeromonas hydrophila subsp. hydrophila (strain ATCC 7966 / DSM 30187 / BCRC 13018 / CCUG 14551 / JCM 1027 / KCTC 2358 / NCIMB 9240 / NCTC 8049).